The primary structure comprises 81 residues: Accessory gland protein Acp63F (81 aa).

The first 16 residues, 1-16 (MKAIIVFILFISSVHA), serve as a signal peptide directing secretion.

As to expression, main cells of accessory gland and seminal fluid.

Its subcellular location is the secreted. Responsible for physiological and behavioral changes in mated female flies. This Drosophila melanogaster (Fruit fly) protein is Accessory gland protein Acp63F (Acp63F).